A 773-amino-acid chain; its full sequence is Lon protease homolog 2, peroxisomal (773 aa).

The 190-residue stretch at 9 to 198 (LPVILVTSGV…MCIKWMNEKK (190 aa)) folds into the Lon N-terminal domain. 336-343 (GPPGIGKT) contacts ATP. The Lon proteolytic domain occupies 587-766 (PLPAGVCFGL…EDVIGAMMDK (180 aa)). Residues S672 and K715 contribute to the active site. A Microbody targeting signal motif is present at residues 771-773 (AKL).

It belongs to the peptidase S16 family.

Its subcellular location is the peroxisome matrix. The catalysed reaction is Hydrolysis of proteins in presence of ATP.. In terms of biological role, ATP-dependent serine protease that mediates the selective degradation of misfolded and unassembled polypeptides in the peroxisomal matrix. Necessary for type 2 peroxisome targeting signal (PTS2)-containing protein processing and facilitates peroxisome matrix protein import. The protein is Lon protease homolog 2, peroxisomal of Caenorhabditis elegans.